The primary structure comprises 79 residues: U16-theraphotoxin-Cg1a (79 aa).

An N-terminal signal peptide occupies residues 1–19 (MRALLIIAGLALFLVVCNA). A propeptide spanning residues 20-44 (SQVNEQRKLNEMLSVMFAVEEPQER) is cleaved from the precursor. 3 disulfides stabilise this stretch: Cys-47/Cys-62, Cys-54/Cys-67, and Cys-61/Cys-74.

Belongs to the neurotoxin 10 (Hwtx-1) family. 34 (Jztx-26) subfamily. Expressed by the venom gland.

The protein localises to the secreted. In terms of biological role, probable ion channel inhibitor. The polypeptide is U16-theraphotoxin-Cg1a (Chilobrachys guangxiensis (Chinese earth tiger tarantula)).